The following is a 574-amino-acid chain: Ankyrin repeat protein B18 (574 aa).

ANK repeat units follow at residues 56–87 (TGYTALHCYLYNNYFTNDVLKILLNHDVNVTM), 135–164 (IKSRYMLLKEEDIDENIVSTLLDKGIDPNF), 167–213 (DGYT…NLNA), 217–249 (CGNTPFHLYLSIEMCNNIHMTKMLLTFNPNFKI), 253–285 (HGLTPILCYITSDYIQHDILVMLIHHYETNVGE), and 327–356 (EGKTLLHVACEYNNTQVIDYLIRINGDINA). In terms of domain architecture, F-box spans 541 to 574 (NCLLTLLPSEIIYEILYMLTINDLYNISYPPTKV).

In Homo sapiens (Human), this protein is Ankyrin repeat protein B18.